A 436-amino-acid polypeptide reads, in one-letter code: MFDSTLNPLWQRYILAVQEEVKPALGCTEPISLALAAAVAAAELEGPVERVEAWVSPNLMKNGLGVTVPGTGMVGLPIAAALGALGGNANAGLEVLKDATAQAIADAKALLAAGKVSVKIQEPCNEILFSRAKVWHGEKWACVTIVGGHTNIVHIETHNGVVFTQQACVAEGEQESPLTVLSRTTLAEILKFVNEVPFAAIRFILDSAKLNCALSQEGLSGKWGLHIGATLEKQCERGLLAKDLSSSIVIRTSAASDARMGGATLPAMSNSGSGNQGITATMPVVVVAEHFGADDERLARALMLSHLSAIYIHNQLPRLSALCAATTAAMGAAAGMAWLVDGRYETISMAISSMIGDVSGMICDGASNSCAMKVSTSASAAWKAVLMALDDTAVTGNEGIVAHDVEQSIANLCALASHSMQQTDRQIIEIMASKAR.

This sequence belongs to the UPF0597 family.

In Escherichia coli (strain 55989 / EAEC), this protein is UPF0597 protein YhaM.